A 421-amino-acid chain; its full sequence is ATP-dependent RNA helicase RhlB (421 aa).

The Q motif motif lies at 9–37; the sequence is QKFSDFALHAKVIEALENKGFHYCTPIQA. One can recognise a Helicase ATP-binding domain in the interval 40-219; sequence LPLTLAGRDV…FEQMNNAEYV (180 aa). 53-60 contacts ATP; that stretch reads AQTGTGKT. The DEAD box signature appears at 165–168; that stretch reads DEAD. The region spanning 245–390 is the Helicase C-terminal domain; that stretch reads RLLQTLIEEE…QSKYNPDALL (146 aa). The tract at residues 386–421 is disordered; that stretch reads PDALLSELPPPKRLTRARSGNGPRRTGAPRNRRRPG. Positions 405–414 are enriched in low complexity; it reads GNGPRRTGAP.

The protein belongs to the DEAD box helicase family. RhlB subfamily. As to quaternary structure, component of the RNA degradosome, which is a multiprotein complex involved in RNA processing and mRNA degradation.

Its subcellular location is the cytoplasm. It catalyses the reaction ATP + H2O = ADP + phosphate + H(+). Its function is as follows. DEAD-box RNA helicase involved in RNA degradation. Has RNA-dependent ATPase activity and unwinds double-stranded RNA. The sequence is that of ATP-dependent RNA helicase RhlB from Enterobacter sp. (strain 638).